Here is a 472-residue protein sequence, read N- to C-terminus: PEP-dependent dihydroxyacetone kinase, phosphoryl donor subunit DhaM (472 aa).

Residues 1–135 (MVNLVIVSHS…HALEAKREQL (135 aa)) enclose the PTS EIIA type-4 domain. His9 functions as the Tele-phosphohistidine intermediate in the catalytic mechanism. The 88-residue stretch at 155-242 (ARSLAVVIKN…QLAEDNFGET (88 aa)) folds into the HPr domain. Residue His169 is the Pros-phosphohistidine intermediate of the active site. Residues 264 to 472 (QPVLCTVQAK…VKTQRFNRQG (209 aa)) are PTS EI-like, N-terminal part. Catalysis depends on His430, which acts as the Tele-phosphohistidine intermediate.

This sequence belongs to the PEP-utilizing enzyme family. Homodimer. The dihydroxyacetone kinase complex is composed of a homodimer of DhaM, a homodimer of DhaK and the subunit DhaL.

The enzyme catalyses dihydroxyacetone + phosphoenolpyruvate = dihydroxyacetone phosphate + pyruvate. It participates in polyol metabolism; glycerol degradation. Its function is as follows. Component of the dihydroxyacetone kinase complex, which is responsible for the phosphoenolpyruvate (PEP)-dependent phosphorylation of dihydroxyacetone. DhaM serves as the phosphoryl donor. Is phosphorylated by phosphoenolpyruvate in an EI- and HPr-dependent reaction, and a phosphorelay system on histidine residues finally leads to phosphoryl transfer to DhaL and dihydroxyacetone. The sequence is that of PEP-dependent dihydroxyacetone kinase, phosphoryl donor subunit DhaM from Escherichia coli (strain K12).